Here is a 143-residue protein sequence, read N- to C-terminus: Small ribosomal subunit protein eS12 (143 aa).

The protein belongs to the eukaryotic ribosomal protein eS12 family. In terms of assembly, component of the small ribosomal subunit. Mature ribosomes consist of a small (40S) and a large (60S) subunit. The 40S subunit contains about 32 different proteins and 1 molecule of RNA (18S). The 60S subunit contains 45 different proteins and 3 molecules of RNA (25S, 5.8S and 5S).

It is found in the cytoplasm. Its function is as follows. Component of the ribosome, a large ribonucleoprotein complex responsible for the synthesis of proteins in the cell. The small ribosomal subunit (SSU) binds messenger RNAs (mRNAs) and translates the encoded message by selecting cognate aminoacyl-transfer RNA (tRNA) molecules. The large subunit (LSU) contains the ribosomal catalytic site termed the peptidyl transferase center (PTC), which catalyzes the formation of peptide bonds, thereby polymerizing the amino acids delivered by tRNAs into a polypeptide chain. The nascent polypeptides leave the ribosome through a tunnel in the LSU and interact with protein factors that function in enzymatic processing, targeting, and the membrane insertion of nascent chains at the exit of the ribosomal tunnel. This chain is Small ribosomal subunit protein eS12 (RPS12), found in Candida albicans (strain SC5314 / ATCC MYA-2876) (Yeast).